The primary structure comprises 217 residues: Guanylate kinase (217 aa).

Residues 1–10 (MAVSSTTLSS) show a composition bias toward low complexity. The interval 1–30 (MAVSSTTLSSPTPPECLQQQEAPRPPATRG) is disordered. One can recognise a Guanylate kinase-like domain in the interval 30–208 (GRLVVLTGPS…ALQELEALLY (179 aa)). 37–44 (GPSGVGKG) contributes to the ATP binding site.

The protein belongs to the guanylate kinase family.

It localises to the cytoplasm. It carries out the reaction GMP + ATP = GDP + ADP. The enzyme catalyses dZMP + ATP = dZDP + ADP. It functions in the pathway purine metabolism. In terms of biological role, essential for recycling GMP and indirectly, cGMP. Its function is as follows. (Microbial infection) Catalyzes the phosphorylation of dZMP to dZDP, when the bacterium is infected by a phage that produces the substrate for the synthesis of dZTP (2- amino-2'-deoxyadenosine 5'-triphosphate), which is then used by the phage as a DNA polymerase substrate. The sequence is that of Guanylate kinase from Synechococcus sp. (strain JA-3-3Ab) (Cyanobacteria bacterium Yellowstone A-Prime).